Consider the following 505-residue polypeptide: Glutamate--tRNA ligase (505 aa).

Residues 12–22 (PSPTGALHIGG) carry the 'HIGH' region motif. Positions 260–264 (KLSKR) match the 'KMSKS' region motif. Residue lysine 263 coordinates ATP.

Belongs to the class-I aminoacyl-tRNA synthetase family. Glutamate--tRNA ligase type 1 subfamily. As to quaternary structure, monomer.

The protein localises to the cytoplasm. It catalyses the reaction tRNA(Glu) + L-glutamate + ATP = L-glutamyl-tRNA(Glu) + AMP + diphosphate. In terms of biological role, catalyzes the attachment of glutamate to tRNA(Glu) in a two-step reaction: glutamate is first activated by ATP to form Glu-AMP and then transferred to the acceptor end of tRNA(Glu). The chain is Glutamate--tRNA ligase from Phocaeicola vulgatus (strain ATCC 8482 / DSM 1447 / JCM 5826 / CCUG 4940 / NBRC 14291 / NCTC 11154) (Bacteroides vulgatus).